Consider the following 215-residue polypeptide: Ribonuclease T (215 aa).

Residues 20 to 194 (VVIDVETAGF…YDTERTAVLF (175 aa)) enclose the Exonuclease domain. Mg(2+) is bound by residues D23, E25, H181, and D186. Catalysis depends on H181, which acts as the Proton donor/acceptor.

This sequence belongs to the RNase T family. In terms of assembly, homodimer. Requires Mg(2+) as cofactor.

Its function is as follows. Trims short 3' overhangs of a variety of RNA species, leaving a one or two nucleotide 3' overhang. Responsible for the end-turnover of tRNA: specifically removes the terminal AMP residue from uncharged tRNA (tRNA-C-C-A). Also appears to be involved in tRNA biosynthesis. In Citrobacter koseri (strain ATCC BAA-895 / CDC 4225-83 / SGSC4696), this protein is Ribonuclease T.